Here is a 306-residue protein sequence, read N- to C-terminus: Recombination-associated protein RdgC (306 aa).

Belongs to the RdgC family.

The protein localises to the cytoplasm. The protein resides in the nucleoid. May be involved in recombination. The chain is Recombination-associated protein RdgC from Pseudomonas paraeruginosa (strain DSM 24068 / PA7) (Pseudomonas aeruginosa (strain PA7)).